The primary structure comprises 491 residues: Glycogen synthase 2 (491 aa).

Position 16 (lysine 16) interacts with ADP-alpha-D-glucose.

It belongs to the glycosyltransferase 1 family. Bacterial/plant glycogen synthase subfamily.

The catalysed reaction is [(1-&gt;4)-alpha-D-glucosyl](n) + ADP-alpha-D-glucose = [(1-&gt;4)-alpha-D-glucosyl](n+1) + ADP + H(+). It participates in glycan biosynthesis; glycogen biosynthesis. Functionally, synthesizes alpha-1,4-glucan chains using ADP-glucose. In Nitrosococcus oceani (strain ATCC 19707 / BCRC 17464 / JCM 30415 / NCIMB 11848 / C-107), this protein is Glycogen synthase 2.